A 327-amino-acid polypeptide reads, in one-letter code: L-lactate dehydrogenase (327 aa).

NAD(+) is bound by residues valine 18, aspartate 39, lysine 44, tyrosine 69, and glycine 83–alanine 84. Residues glutamine 86, arginine 92, and asparagine 124–aspartate 127 contribute to the substrate site. Residues alanine 122–asparagine 124 and serine 147 each bind NAD(+). Residue aspartate 152–arginine 155 participates in substrate binding. Beta-D-fructose 1,6-bisphosphate contacts are provided by arginine 157 and histidine 172. The active-site Proton acceptor is histidine 179. A Phosphotyrosine modification is found at tyrosine 224. Threonine 233 contacts substrate.

The protein belongs to the LDH/MDH superfamily. LDH family. As to quaternary structure, homotetramer.

It localises to the cytoplasm. It catalyses the reaction (S)-lactate + NAD(+) = pyruvate + NADH + H(+). It participates in fermentation; pyruvate fermentation to lactate; (S)-lactate from pyruvate: step 1/1. Allosterically activated by fructose 1,6-bisphosphate (FBP). Functionally, catalyzes the conversion of lactate to pyruvate. The protein is L-lactate dehydrogenase of Streptococcus equi subsp. zooepidemicus (strain H70).